We begin with the raw amino-acid sequence, 92 residues long: N(2)-fixation sustaining protein CowN (92 aa).

Belongs to the CowN family.

In terms of biological role, is required to sustain N(2)-dependent growth in the presence of low levels of carbon monoxide (CO). Probably acts by protecting the N(2) fixation ability of the nitrogenase complex, which is inactivated in the presence of CO. The polypeptide is N(2)-fixation sustaining protein CowN (Rhodobacter capsulatus (strain ATCC BAA-309 / NBRC 16581 / SB1003)).